The chain runs to 815 residues: Probable inorganic carbon transporter subunit DabA (815 aa).

Zn(2+) is bound by residues C334, D336, H507, and C522.

The protein belongs to the inorganic carbon transporter (TC 9.A.2) DabA family. In terms of assembly, forms a complex with DabB. Requires Zn(2+) as cofactor.

It localises to the cell inner membrane. Functionally, part of an energy-coupled inorganic carbon pump. The sequence is that of Probable inorganic carbon transporter subunit DabA from Ectopseudomonas mendocina (strain ymp) (Pseudomonas mendocina).